Reading from the N-terminus, the 1820-residue chain is Sodium channel protein (1820 aa).

Residues 1-117 (MARKFSSARP…FNPIRRGAIR (117 aa)) lie on the Cytoplasmic side of the membrane. The stretch at 108–410 (FNPIRRGAIR…VAMAYEEQNQ (303 aa)) is one I repeat. The helical transmembrane segment at 118 to 138 (VFVNSAFNFFIMFTIFSNCIF) threads the bilayer. Residues 139–149 (MTISNPPAWSK) lie on the Extracellular side of the membrane. A helical membrane pass occupies residues 150 to 171 (IVEYTFTGIYTFEVIVKVLSRG). Residues 172–176 (FCIGH) are Cytoplasmic-facing. The chain crosses the membrane as a helical span at residues 177–197 (FTFLRDPWNWLDFSVVTMTYI). The Extracellular segment spans residues 198–203 (TEFIDL). Residues 204 to 224 (RNVSALRTFRVLRALKTITIF) traverse the membrane as a helical; Voltage-sensor segment. The Cytoplasmic segment spans residues 225 to 243 (PGLKTIVRALIESMKQMGD). The chain crosses the membrane as a helical span at residues 244–264 (VVILTVFSLAVFTLAGMQLFM). At 265–346 (GNLRHKCIRW…PNYGYTNYDN (82 aa)) the chain is on the extracellular side. Cysteine 271 and cysteine 324 are oxidised to a cystine. Asparagine 278, asparagine 288, and asparagine 317 each carry an N-linked (GlcNAc...) asparagine glycan. Residues 285–342 (SAYNTTFDFTAYIENEENQYFLDGALDALLCGNNSDAGKCPEGYTCMKAGRNPNYGYT) are non-homologous region of repeat I. Residues 347–371 (FAWTFLCLFRLMLQDYWENLYQMTL) constitute an intramembrane region (pore-forming). The Extracellular segment spans residues 372–378 (RAAGKSY). A helical membrane pass occupies residues 379–402 (MVFFIMVIFLGSFYLINLILAVVA). At 403–557 (MAYEEQNQAT…CCGPWVFLKK (155 aa)) the chain is on the cytoplasmic side. The disordered stretch occupies residues 483-507 (SVKLSTEEQRSDSKSMDSKHSVDKP). The span at 487–507 (STEEQRSDSKSMDSKHSVDKP) shows a compositional bias: basic and acidic residues. Residues 548–811 (CCGPWVFLKK…EEDDEVNSLQ (264 aa)) form an II repeat. The chain crosses the membrane as a helical span at residues 558 to 578 (WVHFVMMDPFTDLFITLCIIL). The Extracellular segment spans residues 579–599 (NTLFMSIEHHPMNESFQSLLS). N-linked (GlcNAc...) asparagine glycosylation occurs at asparagine 591. The helical transmembrane segment at 600–620 (AGNLVFTTIFAAEMVLKIIAL) threads the bilayer. The Cytoplasmic segment spans residues 621–625 (DPYYY). Residues 626-643 (FQQTWNIFDSIIVSLSLL) traverse the membrane as a helical segment. The Extracellular portion of the chain corresponds to 644-650 (ELGLSNM). A helical; Voltage-sensor transmembrane segment spans residues 651-671 (QGMSVLRSLRLLRIFKLAKSW). The Cytoplasmic segment spans residues 672 to 690 (PTLNILIKIICNSVGALGN). The chain crosses the membrane as a helical span at residues 691–711 (LTIVLAIIVFIFALVGFQLFG). Residues 712–734 (KNYKEYVCKISDDCELPRWHMND) are Extracellular-facing. The segment at residues 735–755 (FFHSFLIVFRALCGEWIETMW) is an intramembrane region (pore-forming). At 756–766 (DCMEVGGVPMC) the chain is on the extracellular side. Cysteines 757 and 766 form a disulfide. Residues 767 to 790 (LAVYMMVIIIGNLVMLNLFLALLL) form a helical membrane-spanning segment. Residues 791–1004 (SSFSSDNLSS…TIVEHDYFET (214 aa)) lie on the Cytoplasmic side of the membrane. Disordered stretches follow at residues 844–864 (PPSD…DTLP) and 891–959 (VKGE…SKDP). The span at 896-910 (EIEEEGLVDSSDEED) shows a compositional bias: acidic residues. A compositionally biased stretch (polar residues) spans 924–935 (SVCSTVDYSPSE). Residues 942-953 (EEEEEEEEEPEE) show a composition bias toward acidic residues. Residues 988 to 1295 (NLRRTCYTIV…KKYYNAMKKL (308 aa)) form an III repeat. Residues 1005–1025 (FIIFMILLSSGVLAFEDIYIW) traverse the membrane as a helical segment. Residues 1026 to 1037 (RRRVIKVILEYA) lie on the Extracellular side of the membrane. Residues 1038–1058 (DKVFTYVFIVEMLLKWVAYGF) traverse the membrane as a helical segment. The Cytoplasmic segment spans residues 1059–1065 (KRYFTDA). The helical transmembrane segment at 1066-1086 (WCWLDFVIVGASIMGITSSLL) threads the bilayer. At 1087 to 1091 (GYEEL) the chain is on the extracellular side. The chain crosses the membrane as a helical; Voltage-sensor span at residues 1092–1112 (GAIKNLRTIRALRPLRALSRF). Residues 1113–1131 (EGMKVVVRALLGAIPSIMN) lie on the Cytoplasmic side of the membrane. The helical transmembrane segment at 1132–1152 (VLLVCLMFWLIFSIMGVNLFA) threads the bilayer. The Extracellular segment spans residues 1153–1199 (GKFYRCINTTTDEILPVEEVNNRSDCMALMYTNEVRWVNLKVNYDNA). Residues asparagine 1160 and asparagine 1174 are each glycosylated (N-linked (GlcNAc...) asparagine). Positions 1172–1194 (VNNRSDCMALMYTNEVRWVNLKV) are non-homologous region of repeat III. An intramembrane region (pore-forming) is located at residues 1200-1221 (GMGYLSLLQVSTFKGWMDIMYA). Over 1222-1243 (AVDSREVEDQPIYEINVYMYLY) the chain is Extracellular. The chain crosses the membrane as a helical span at residues 1244–1264 (FVIFIVFGAFFTLNLFIGVII). Over 1265–1320 (DNFNRQKQKLGGEDLFMTEEQKKYYNAMKKLGSKKAAKCIPRPSNVVQGVVYDIVT) the chain is Cytoplasmic. The IV repeat unit spans residues 1304–1602 (IPRPSNVVQG…WHKFDVHGTQ (299 aa)). The chain crosses the membrane as a helical span at residues 1321–1341 (QPFTDIFIMALICINMVAMMV). Over 1342 to 1352 (ESEDQSQVKKD) the chain is Extracellular. A helical membrane pass occupies residues 1353–1376 (ILSQINVIFVIIFTVECLLKLLAL). Topologically, residues 1377–1380 (RQYF) are cytoplasmic. The chain crosses the membrane as a helical span at residues 1381–1398 (FTVGWNVFDFAVVVISII). At 1399–1416 (GLLLSDIIEKYFVSPTLF) the chain is on the extracellular side. Residues 1417-1437 (RVIRLARIARVLRLIRAAKGI) form a helical; Voltage-sensor membrane-spanning segment. At 1438 to 1453 (RTLLFALMMSLPALFN) the chain is on the cytoplasmic side. A helical membrane pass occupies residues 1454-1474 (IGLLLFLIMFIFSIFGMSNFA). The Extracellular portion of the chain corresponds to 1475 to 1490 (YVKKQGGVDDIFNFET). The interval 1490 to 1505 (TFGNSMICLFEITTSA) is non-homologous region of repeat IV. Residues 1491–1513 (FGNSMICLFEITTSAGWDGLLLP) constitute an intramembrane region (pore-forming). Residues 1514–1543 (TLNTGPPDCDPDVENPGTDVRGNCGNPGKG) are Extracellular-facing. Residues 1544-1567 (ITFFCSYIILSFLVVVNMYIAIIL) traverse the membrane as a helical segment. Residues 1568–1820 (ENFGVAQEES…GAIVVRESIV (253 aa)) lie on the Cytoplasmic side of the membrane.

It belongs to the sodium channel (TC 1.A.1.10) family.

The protein resides in the cell membrane. Its function is as follows. Mediates the voltage-dependent sodium ion permeability of excitable membranes. Assuming opened or closed conformations in response to the voltage difference across the membrane, the protein forms a sodium-selective channel through which Na(+) ions may pass in accordance with their electrochemical gradient. The protein is Sodium channel protein of Electrophorus electricus (Electric eel).